A 185-amino-acid polypeptide reads, in one-letter code: Ribosome-recycling factor (185 aa).

Belongs to the RRF family.

The protein localises to the cytoplasm. In terms of biological role, responsible for the release of ribosomes from messenger RNA at the termination of protein biosynthesis. May increase the efficiency of translation by recycling ribosomes from one round of translation to another. The chain is Ribosome-recycling factor from Enterococcus faecalis (strain ATCC 700802 / V583).